The primary structure comprises 2561 residues: Plipastatin synthase subunit A (2561 aa).

A domain 1 (glutamate-activating) region spans residues 1-1038 (MSEHTYSLTH…ATVIREGTDS (1038 aa)). The interval 2–300 (SEHTYSLTHA…SSLPIRITVD (299 aa)) is condensation 1. The tract at residues 485–888 (TYAELDMYAS…SIEGVREAAV (404 aa)) is adenylation 1. A Carrier 1 domain is found at 961 to 1036 (APRNVTEMKL…GLATVIREGT (76 aa)). An O-(pantetheine 4'-phosphoryl)serine modification is found at serine 996. A condensation 2 region spans residues 1048–1338 (KQETYPVSSA…NTLALRTRPE (291 aa)). The tract at residues 1048-2554 (KQETYPVSSA…ELTLSALSSI (1507 aa)) is domain 2 (D-ornithine-activating). Positions 1525-1932 (SYRLLNERAN…QTGLVREAAV (408 aa)) are adenylation 2. One can recognise a Carrier 2 domain in the interval 2007 to 2081 (APVNDLQKTM…ELCGHITPLA (75 aa)). Serine 2042 bears the O-(pantetheine 4'-phosphoryl)serine mark. Residues 2089-2554 (AEGEAELTPI…ELTLSALSSI (466 aa)) are epimerization.

Belongs to the ATP-dependent AMP-binding enzyme family. Requires pantetheine 4'-phosphate as cofactor.

In terms of biological role, this protein is a multifunctional enzyme, able to activate and polymerize the amino acids Glu and Orn as part of the biosynthesis of the lipopeptide antibiotic lipastatin. The Orn residue is further epimerized to the D-isomer form. The activation sites for these amino acids consist of individual domains. This Bacillus subtilis (strain 168) protein is Plipastatin synthase subunit A (ppsA).